We begin with the raw amino-acid sequence, 172 residues long: 3-hydroxydecanoyl-[acyl-carrier-protein] dehydratase (172 aa).

Histidine 71 is a catalytic residue.

This sequence belongs to the thioester dehydratase family. FabA subfamily. In terms of assembly, homodimer.

The protein resides in the cytoplasm. It carries out the reaction a (3R)-hydroxyacyl-[ACP] = a (2E)-enoyl-[ACP] + H2O. It catalyses the reaction (3R)-hydroxydecanoyl-[ACP] = (2E)-decenoyl-[ACP] + H2O. The catalysed reaction is (2E)-decenoyl-[ACP] = (3Z)-decenoyl-[ACP]. Its pathway is lipid metabolism; fatty acid biosynthesis. Functionally, necessary for the introduction of cis unsaturation into fatty acids. Catalyzes the dehydration of (3R)-3-hydroxydecanoyl-ACP to E-(2)-decenoyl-ACP and then its isomerization to Z-(3)-decenoyl-ACP. Can catalyze the dehydratase reaction for beta-hydroxyacyl-ACPs with saturated chain lengths up to 16:0, being most active on intermediate chain length. This chain is 3-hydroxydecanoyl-[acyl-carrier-protein] dehydratase, found in Vibrio parahaemolyticus serotype O3:K6 (strain RIMD 2210633).